The primary structure comprises 392 residues: MLTIGTALRADATRVMLLGSGELGKEVAIECQRLGIEVIAVDRYADAPAMQIAHRSHVINMLDGDALKALVEAERPDYIVPEIEAIATDMLVTLEKQGHHVVPCAEATRLTMNREGIRRLAAETLGVPTSTYRFADSEESFRQAVEAIGYPCIVKPVMSSSGKGQSLIRSAEQLDKAWNYAQQGGRAGGGRVIVEGLVNFDFEITLLTVHAVDGIHFCAPIGHRQEDGDYRESWQPQQMSALAQERAQKMASDVVKALGGYGLFGVELFVCGDEVIFSEVSPRPHDTGMVTMISQDLSEFALHVRAFLGLPIGAVRQYGASASAVILPELESNNVRYQGLESALLPHTQIRLFGKPDIGGKRRMGVALASAETTEDAVEIAKRVAAGVTVSG.

N(1)-(5-phospho-beta-D-ribosyl)glycinamide-binding positions include 22–23 (EL) and E82. ATP contacts are provided by residues R114, K155, 160–165 (SSGKGQ), 195–198 (EGLV), and E203. The 190-residue stretch at 119-308 (RLAAETLGVP…EFALHVRAFL (190 aa)) folds into the ATP-grasp domain. 2 residues coordinate Mg(2+): E267 and E279. Residues D286, K355, and 362 to 363 (RR) each bind N(1)-(5-phospho-beta-D-ribosyl)glycinamide.

Belongs to the PurK/PurT family. Homodimer.

It carries out the reaction N(1)-(5-phospho-beta-D-ribosyl)glycinamide + formate + ATP = N(2)-formyl-N(1)-(5-phospho-beta-D-ribosyl)glycinamide + ADP + phosphate + H(+). Its pathway is purine metabolism; IMP biosynthesis via de novo pathway; N(2)-formyl-N(1)-(5-phospho-D-ribosyl)glycinamide from N(1)-(5-phospho-D-ribosyl)glycinamide (formate route): step 1/1. Functionally, involved in the de novo purine biosynthesis. Catalyzes the transfer of formate to 5-phospho-ribosyl-glycinamide (GAR), producing 5-phospho-ribosyl-N-formylglycinamide (FGAR). Formate is provided by PurU via hydrolysis of 10-formyl-tetrahydrofolate. This chain is Formate-dependent phosphoribosylglycinamide formyltransferase, found in Pectobacterium carotovorum subsp. carotovorum (strain PC1).